The following is a 180-amino-acid chain: Large ribosomal subunit protein uL5 (180 aa).

It belongs to the universal ribosomal protein uL5 family. As to quaternary structure, part of the 50S ribosomal subunit; part of the 5S rRNA/L5/L18/L25 subcomplex. Contacts the 5S rRNA and the P site tRNA. Forms a bridge to the 30S subunit in the 70S ribosome.

This is one of the proteins that bind and probably mediate the attachment of the 5S RNA into the large ribosomal subunit, where it forms part of the central protuberance. In the 70S ribosome it contacts protein S13 of the 30S subunit (bridge B1b), connecting the 2 subunits; this bridge is implicated in subunit movement. Contacts the P site tRNA; the 5S rRNA and some of its associated proteins might help stabilize positioning of ribosome-bound tRNAs. The sequence is that of Large ribosomal subunit protein uL5 from Lactobacillus acidophilus (strain ATCC 700396 / NCK56 / N2 / NCFM).